Consider the following 1056-residue polypeptide: Isoleucine--tRNA ligase (1056 aa).

The span at 1–13 (MCDQGEVSSQNSS) shows a compositional bias: polar residues. The disordered stretch occupies residues 1-26 (MCDQGEVSSQNSSDYKEQRPTPRPNL). Positions 63 to 73 (PFANGLPHFGH) match the 'HIGH' region motif. The short motif at 632–636 (KASKS) is the 'KMSKS' region element. K635 contacts ATP.

The protein belongs to the class-I aminoacyl-tRNA synthetase family. IleS type 2 subfamily. In terms of assembly, monomer. Zn(2+) serves as cofactor.

The protein resides in the cytoplasm. The enzyme catalyses tRNA(Ile) + L-isoleucine + ATP = L-isoleucyl-tRNA(Ile) + AMP + diphosphate. Catalyzes the attachment of isoleucine to tRNA(Ile). As IleRS can inadvertently accommodate and process structurally similar amino acids such as valine, to avoid such errors it has two additional distinct tRNA(Ile)-dependent editing activities. One activity is designated as 'pretransfer' editing and involves the hydrolysis of activated Val-AMP. The other activity is designated 'posttransfer' editing and involves deacylation of mischarged Val-tRNA(Ile). The protein is Isoleucine--tRNA ligase of Tropheryma whipplei (strain TW08/27) (Whipple's bacillus).